We begin with the raw amino-acid sequence, 479 residues long: Mannose-1-phosphate guanylyltransferase RfbM (479 aa).

It belongs to the mannose-6-phosphate isomerase type 2 family. In terms of assembly, homodimer.

The enzyme catalyses alpha-D-mannose 1-phosphate + GTP + H(+) = GDP-alpha-D-mannose + diphosphate. It functions in the pathway nucleotide-sugar biosynthesis; GDP-alpha-D-mannose biosynthesis; GDP-alpha-D-mannose from alpha-D-mannose 1-phosphate (GTP route): step 1/1. The protein operates within bacterial outer membrane biogenesis; LPS O-antigen biosynthesis. Involved in GDP-mannose biosynthesis which serves as the activated sugar nucleotide precursor for mannose residues in cell surface polysaccharides. This enzyme participates in synthesis of the LPS group B O antigen. The chain is Mannose-1-phosphate guanylyltransferase RfbM (rfbM) from Salmonella typhimurium (strain LT2 / SGSC1412 / ATCC 700720).